An 88-amino-acid polypeptide reads, in one-letter code: MEGITGKELILAASAIGAGLAMIAGLGPGIGQGIAAGKGAEAVGRQPEAQGDILRTMLLGQAVAETTGIYSLVIALILLFANPLIRLL.

The next 2 helical transmembrane spans lie at 10–30 (ILAA…GPGI) and 68–88 (GIYS…IRLL).

Belongs to the ATPase C chain family. In terms of assembly, F-type ATPases have 2 components, F(1) - the catalytic core - and F(0) - the membrane proton channel. F(1) has five subunits: alpha(3), beta(3), gamma(1), delta(1), epsilon(1). F(0) has three main subunits: a(1), b(2) and c(10-14). The alpha and beta chains form an alternating ring which encloses part of the gamma chain. F(1) is attached to F(0) by a central stalk formed by the gamma and epsilon chains, while a peripheral stalk is formed by the delta and b chains.

Its subcellular location is the cell membrane. F(1)F(0) ATP synthase produces ATP from ADP in the presence of a proton or sodium gradient. F-type ATPases consist of two structural domains, F(1) containing the extramembraneous catalytic core and F(0) containing the membrane proton channel, linked together by a central stalk and a peripheral stalk. During catalysis, ATP synthesis in the catalytic domain of F(1) is coupled via a rotary mechanism of the central stalk subunits to proton translocation. Its function is as follows. Key component of the F(0) channel; it plays a direct role in translocation across the membrane. A homomeric c-ring of between 10-14 subunits forms the central stalk rotor element with the F(1) delta and epsilon subunits. The polypeptide is ATP synthase subunit c (Alkaliphilus oremlandii (strain OhILAs) (Clostridium oremlandii (strain OhILAs))).